The chain runs to 381 residues: Orotidine 5'-phosphate decarboxylase (381 aa).

Residues Asp-42, 64–66 (KTH), 99–108 (DRKFGDIGHT), Tyr-333, and Arg-352 each bind substrate. Lys-101 (proton donor) is an active-site residue. Residues 311–333 (LPPEDEDQQTNGSVGGDGQGQQY) are disordered.

Belongs to the OMP decarboxylase family.

The enzyme catalyses orotidine 5'-phosphate + H(+) = UMP + CO2. The protein operates within pyrimidine metabolism; UMP biosynthesis via de novo pathway; UMP from orotate: step 2/2. In Hypocrea jecorina (Trichoderma reesei), this protein is Orotidine 5'-phosphate decarboxylase (ura3).